We begin with the raw amino-acid sequence, 728 residues long: Pre-mRNA-splicing ATP-dependent RNA helicase prp-28 (728 aa).

Positions 19–155 (KKEEEAAAAK…NDEAELRARY (137 aa)) are disordered. Composition is skewed to basic and acidic residues over residues 33-59 (PKKE…EEAK), 109-125 (RDYR…DRNQ), and 137-153 (EEKR…ELRA). The Q motif motif lies at 293–321 (RSWEESTLPRRLLDIVKNVGYDEPTPIQR). Residues 324-527 (IPIALQARDL…KKYLRRPAIV (204 aa)) form the Helicase ATP-binding domain. 337–344 (AVTGSGKT) provides a ligand contact to ATP. A DEAD box motif is present at residues 450 to 453 (DEAD). Residues 538-701 (TVEQRVEFVS…KVPDELRRHE (164 aa)) enclose the Helicase C-terminal domain. The tract at residues 692–728 (KVPDELRRHEAAQNKPQKGQKKLEESNGYSGKGGSWN) is disordered. A compositionally biased stretch (basic and acidic residues) spans 693–703 (VPDELRRHEAA).

The protein belongs to the DEAD box helicase family. DDX23/PRP28 subfamily. Component of the U5 snRNP complex.

The protein localises to the cytoplasm. It is found in the nucleus. The enzyme catalyses ATP + H2O = ADP + phosphate + H(+). Functionally, ATP-dependent RNA helicase involved in mRNA splicing. May destabilize the U1/5'-splice site duplex to permit an effective competition for the 5'-splice site by the U6 snRNA, resulting in the switch between U1 and U6 at the 5'-splice site. May also act to unwind the U4/U6 base-pairing interaction in the U4/U6/U5 snRNP, facilitating the first covalent step of splicing. This Neurospora crassa (strain ATCC 24698 / 74-OR23-1A / CBS 708.71 / DSM 1257 / FGSC 987) protein is Pre-mRNA-splicing ATP-dependent RNA helicase prp-28 (prp-28).